The chain runs to 270 residues: uncharacterized protein (270 aa).

This is an uncharacterized protein from Aquifex aeolicus (strain VF5).